The following is a 660-amino-acid chain: UvrABC system protein B (660 aa).

A Helicase ATP-binding domain is found at 27–414 (NGVNEGKRHQ…TDEMVQQIIR (388 aa)). Residue 40-47 (GATGTGKT) coordinates ATP. Positions 93-116 (YYDYYQPEAYVPSTDTFIEKDASI) match the Beta-hairpin motif. One can recognise a Helicase C-terminal domain in the interval 431–593 (QIDDLLGEIQ…ITPTTINKKI (163 aa)). The disordered stretch occupies residues 603 to 622 (NDETNEQQQTEVPKKMTKKE). The UVR domain maps to 624–659 (EKTIANIEKEMKQAAKDLDFEKATELRDMLFELKAE).

The protein belongs to the UvrB family. Forms a heterotetramer with UvrA during the search for lesions. Interacts with UvrC in an incision complex.

Its subcellular location is the cytoplasm. Functionally, the UvrABC repair system catalyzes the recognition and processing of DNA lesions. A damage recognition complex composed of 2 UvrA and 2 UvrB subunits scans DNA for abnormalities. Upon binding of the UvrA(2)B(2) complex to a putative damaged site, the DNA wraps around one UvrB monomer. DNA wrap is dependent on ATP binding by UvrB and probably causes local melting of the DNA helix, facilitating insertion of UvrB beta-hairpin between the DNA strands. Then UvrB probes one DNA strand for the presence of a lesion. If a lesion is found the UvrA subunits dissociate and the UvrB-DNA preincision complex is formed. This complex is subsequently bound by UvrC and the second UvrB is released. If no lesion is found, the DNA wraps around the other UvrB subunit that will check the other stand for damage. The protein is UvrABC system protein B of Staphylococcus saprophyticus subsp. saprophyticus (strain ATCC 15305 / DSM 20229 / NCIMB 8711 / NCTC 7292 / S-41).